Here is a 154-residue protein sequence, read N- to C-terminus: Myoglobin (154 aa).

Residues 2–148 enclose the Globin domain; it reads GLSDGEWQLV…FRNDIAAKYK (147 aa). Ser4 is modified (phosphoserine). Residue His65 participates in nitrite binding. His65 provides a ligand contact to O2. Thr68 bears the Phosphothreonine mark. His94 lines the heme b pocket.

Belongs to the globin family. In terms of assembly, monomeric.

The protein localises to the cytoplasm. It is found in the sarcoplasm. It carries out the reaction Fe(III)-heme b-[protein] + nitric oxide + H2O = Fe(II)-heme b-[protein] + nitrite + 2 H(+). The catalysed reaction is H2O2 + AH2 = A + 2 H2O. Functionally, monomeric heme protein which primary function is to store oxygen and facilitate its diffusion within muscle tissues. Reversibly binds oxygen through a pentacoordinated heme iron and enables its timely and efficient release as needed during periods of heightened demand. Depending on the oxidative conditions of tissues and cells, and in addition to its ability to bind oxygen, it also has a nitrite reductase activity whereby it regulates the production of bioactive nitric oxide. Under stress conditions, like hypoxia and anoxia, it also protects cells against reactive oxygen species thanks to its pseudoperoxidase activity. This Lagostomus maximus (Plains viscacha) protein is Myoglobin (MB).